The chain runs to 95 residues: Large ribosomal subunit protein bL27 (95 aa).

The propeptide occupies Met1 to Phe9.

Belongs to the bacterial ribosomal protein bL27 family. Post-translationally, the N-terminus is cleaved by ribosomal processing cysteine protease Prp.

This is Large ribosomal subunit protein bL27 from Lachnoclostridium phytofermentans (strain ATCC 700394 / DSM 18823 / ISDg) (Clostridium phytofermentans).